The primary structure comprises 229 residues: Sugar fermentation stimulation protein homolog (229 aa).

This sequence belongs to the SfsA family.

In Carboxydothermus hydrogenoformans (strain ATCC BAA-161 / DSM 6008 / Z-2901), this protein is Sugar fermentation stimulation protein homolog.